We begin with the raw amino-acid sequence, 425 residues long: Histidine--tRNA ligase (425 aa).

It belongs to the class-II aminoacyl-tRNA synthetase family. As to quaternary structure, homodimer.

The protein resides in the cytoplasm. It carries out the reaction tRNA(His) + L-histidine + ATP = L-histidyl-tRNA(His) + AMP + diphosphate + H(+). This is Histidine--tRNA ligase from Shewanella sp. (strain MR-4).